The primary structure comprises 184 residues: Signal peptidase I S (184 aa).

Topologically, residues methionine 1 to alanine 18 are cytoplasmic. The helical transmembrane segment at isoleucine 19–valine 39 threads the bilayer. Residues aspartate 40–asparagine 184 lie on the Extracellular side of the membrane. Active-site residues include serine 43 and lysine 83.

The protein belongs to the peptidase S26 family.

The protein localises to the cell membrane. It carries out the reaction Cleavage of hydrophobic, N-terminal signal or leader sequences from secreted and periplasmic proteins.. Functionally, not essential for cell viability, but required for efficient secretion of many proteins. This Bacillus subtilis (strain 168) protein is Signal peptidase I S (sipS).